The sequence spans 430 residues: MWRLVPPKLGRLSRSLKLAALGSLLVLMVLHSPSLLASWQRNELTDRRFLQLNKCPACFGTSWCRRFLNGQVVFEAWGRLRLLDFLNVKNVYFAQYGEPREGGRRRVVLKRLGSQRELAQLDQSICKRATGRPRCDLLQAMPRTEFARLNGDVRLLTPEAVEGWSDLVHCPSQRLLDRLVRRYAETKDSGSFLLRNLKDSERMQLLLTLAFNPEPLVLQSFPSDEGWPFAKYLGACGRMVAVNYVGEELWSYFNAPWEKRVDLAWQLMEIAEQLTNNDFEFALYLLDVSFDNFAVGPRDGKVIIVDAENVLVADKRLIRQNKPENWDVWYESKFDDCDKEACLSFSKEILCARATVDHNYYAVCQNLLSRHATWRGTSGGLLHDPPSEIAKDGRLEALLDECANPKKRYGRFQAAKELREYLAQLSNNVR.

A signal peptide spans 1 to 35 (MWRLVPPKLGRLSRSLKLAALGSLLVLMVLHSPSL).

Belongs to the DIPK family.

It is found in the cytoplasmic vesicle. The protein localises to the COPI-coated vesicle. It localises to the golgi apparatus. Its subcellular location is the secreted. Functionally, may play a role in cardiomyocyte proliferation through paracrine signaling and activation of the PPI3K-AKT-CDK7 signaling cascade. The sequence is that of Divergent protein kinase domain 2A from Homo sapiens (Human).